Here is a 284-residue protein sequence, read N- to C-terminus: Small ribosomal subunit protein uS5y/uS5u/uS5v (284 aa).

The span at 1–19 shows a compositional bias: basic and acidic residues; that stretch reads MAERGGESGAERGGDRGDF. Positions 1-51 are disordered; that stretch reads MAERGGESGAERGGDRGDFGRGFGGGRGGGRGRDRGPRGRGRRGGRASEET. Residues 20-29 are compositionally biased toward gly residues; sequence GRGFGGGRGG. The region spanning 95-158 is the S5 DRBM domain; it reads LKDEVMKIMP…ILAKLSVVPV (64 aa).

The protein belongs to the universal ribosomal protein uS5 family.

The chain is Small ribosomal subunit protein uS5y/uS5u/uS5v (RPS2B) from Arabidopsis thaliana (Mouse-ear cress).